We begin with the raw amino-acid sequence, 1029 residues long: U2 snRNP-associated SURP motif-containing protein (1029 aa).

2 disordered regions span residues 1–111 (MADK…EDEK) and 141–274 (VNAA…PSTT). Ala2 carries the post-translational modification N-acetylalanine. Positions 7–16 (GGSQKASSKT) are enriched in polar residues. Basic residues predominate over residues 45–54 (TRPKSPRKHN). Over residues 55–64 (YRNESARESL) the composition is skewed to basic and acidic residues. The residue at position 67 (Ser67) is a Phosphoserine. Lys80 is covalently cross-linked (Glycyl lysine isopeptide (Lys-Gly) (interchain with G-Cter in SUMO2)). Positions 92–121 (AKRTLSKKEQEELKKKEDEKAAAEIYEEFL) form a coiled coil. Basic and acidic residues-rich tracts occupy residues 97-111 (SKKEQEELKKKEDEK) and 144-155 (AKEEHETDEKRG). Residues Lys145 and Lys168 each participate in a glycyl lysine isopeptide (Lys-Gly) (interchain with G-Cter in SUMO2) cross-link. Residues 169–178 (NPPNQSSNER) are compositionally biased toward polar residues. Basic and acidic residues predominate over residues 186–222 (ETKKPPLKKGEKEKKKSNLELFKEELKQIQEERDERH). Residues 192-232 (LKKGEKEKKKSNLELFKEELKQIQEERDERHKTKGRLSRFE) adopt a coiled-coil conformation. Position 202 is a phosphoserine (Ser202). Residue Lys208 forms a Glycyl lysine isopeptide (Lys-Gly) (interchain with G-Cter in SUMO2) linkage. Phosphoserine is present on Ser236. Basic and acidic residues predominate over residues 239 to 249 (DGQRRSMDAPS). Positions 274–355 (TNLYLGNINP…FEMKLGWGKA (82 aa)) constitute an RRM domain. The stretch at 430–473 (LIHRMIEFVVREGPMFEAMIMNREINNPMFRFLFENQTPAHVYY) is one SURP motif repeat. Position 485 is a phosphoserine (Ser485). Residues 534 to 679 (LKEEQRDKLE…KLQNIFLGLV (146 aa)) form the CID domain. The residue at position 719 (Thr719) is a Phosphothreonine. Residues Lys748 and Lys749 each participate in a glycyl lysine isopeptide (Lys-Gly) (interchain with G-Cter in SUMO2) cross-link. Lys760 is modified (N6-acetyllysine; alternate). Lys760 participates in a covalent cross-link: Glycyl lysine isopeptide (Lys-Gly) (interchain with G-Cter in SUMO2); alternate. Disordered stretches follow at residues 778-841 (KWEL…EEKR) and 855-1029 (QDEL…KNKH). Positions 786–806 (EESEEEENQNQEEESEDEEDT) are enriched in acidic residues. A phosphoserine mark is found at Ser788, Ser800, and Ser811. Composition is skewed to basic and acidic residues over residues 810–841 (KSEEHHLYSNPIKEEMTESKFSKYSEMSEEKR) and 874–922 (QVEH…TPTR). Glycyl lysine isopeptide (Lys-Gly) (interchain with G-Cter in SUMO2) cross-links involve residues Lys822, Lys829, and Lys832. Residues 837-915 (SEEKRAKLRE…ESRSKDKKEK (79 aa)) adopt a coiled-coil conformation. A Phosphothreonine modification is found at Thr931. Ser946 and Ser948 each carry phosphoserine. The segment covering 950–980 (KSERSERSERSHKESSRSRSSHKDSPRDVSK) has biased composition (basic and acidic residues). The segment covering 991-1029 (TPKRSRRSRSRSPKKSGKKSRSQSRSPHRSHKKSKKNKH) has biased composition (basic residues).

It belongs to the splicing factor SR family. As to quaternary structure, interacts with ERBB4.

It localises to the nucleus. The protein is U2 snRNP-associated SURP motif-containing protein (U2SURP) of Homo sapiens (Human).